We begin with the raw amino-acid sequence, 264 residues long: 3-methyl-2-oxobutanoate hydroxymethyltransferase (264 aa).

Mg(2+) contacts are provided by D45 and D84. Residues 45–46 (DS), D84, and K112 each bind 3-methyl-2-oxobutanoate. Residue E114 coordinates Mg(2+). E181 serves as the catalytic Proton acceptor.

Belongs to the PanB family. Homodecamer; pentamer of dimers. Requires Mg(2+) as cofactor.

It is found in the cytoplasm. The catalysed reaction is 3-methyl-2-oxobutanoate + (6R)-5,10-methylene-5,6,7,8-tetrahydrofolate + H2O = 2-dehydropantoate + (6S)-5,6,7,8-tetrahydrofolate. Its pathway is cofactor biosynthesis; (R)-pantothenate biosynthesis; (R)-pantoate from 3-methyl-2-oxobutanoate: step 1/2. Its function is as follows. Catalyzes the reversible reaction in which hydroxymethyl group from 5,10-methylenetetrahydrofolate is transferred onto alpha-ketoisovalerate to form ketopantoate. The polypeptide is 3-methyl-2-oxobutanoate hydroxymethyltransferase (Shewanella sp. (strain MR-7)).